A 114-amino-acid polypeptide reads, in one-letter code: Hydrogenase maturation factor HypA (114 aa).

Residue His-2 coordinates Ni(2+). Zn(2+) is bound by residues Cys-73, Cys-76, Cys-90, and Cys-93.

This sequence belongs to the HypA/HybF family.

In terms of biological role, involved in the maturation of [NiFe] hydrogenases. Required for nickel insertion into the metal center of the hydrogenase. This chain is Hydrogenase maturation factor HypA, found in Klebsiella pneumoniae subsp. pneumoniae (strain ATCC 700721 / MGH 78578).